The following is a 362-amino-acid chain: tRNA 2-selenouridine synthase (362 aa).

Positions L14–N137 constitute a Rhodanese domain. The active-site S-selanylcysteine intermediate is C97.

The protein belongs to the SelU family. In terms of assembly, monomer.

It carries out the reaction 5-methylaminomethyl-2-thiouridine(34) in tRNA + selenophosphate + (2E)-geranyl diphosphate + H2O + H(+) = 5-methylaminomethyl-2-selenouridine(34) in tRNA + (2E)-thiogeraniol + phosphate + diphosphate. It catalyses the reaction 5-methylaminomethyl-2-thiouridine(34) in tRNA + (2E)-geranyl diphosphate = 5-methylaminomethyl-S-(2E)-geranyl-thiouridine(34) in tRNA + diphosphate. The enzyme catalyses 5-methylaminomethyl-S-(2E)-geranyl-thiouridine(34) in tRNA + selenophosphate + H(+) = 5-methylaminomethyl-2-(Se-phospho)selenouridine(34) in tRNA + (2E)-thiogeraniol. The catalysed reaction is 5-methylaminomethyl-2-(Se-phospho)selenouridine(34) in tRNA + H2O = 5-methylaminomethyl-2-selenouridine(34) in tRNA + phosphate. Involved in the post-transcriptional modification of the uridine at the wobble position (U34) of tRNA(Lys), tRNA(Glu) and tRNA(Gln). Catalyzes the conversion of 2-thiouridine (S2U-RNA) to 2-selenouridine (Se2U-RNA). Acts in a two-step process involving geranylation of 2-thiouridine (S2U) to S-geranyl-2-thiouridine (geS2U) and subsequent selenation of the latter derivative to 2-selenouridine (Se2U) in the tRNA chain. The chain is tRNA 2-selenouridine synthase from Proteus mirabilis (strain HI4320).